Reading from the N-terminus, the 123-residue chain is Non-specific lipid-transfer protein (123 aa).

Residues 1 to 25 (MAVKKMVEAVFVVGLVVTMMNVWGA) form the signal peptide. Cystine bridges form between Cys-34–Cys-82, Cys-44–Cys-59, Cys-60–Cys-104, and Cys-80–Cys-119.

It belongs to the plant LTP family.

Its function is as follows. Plant non-specific lipid-transfer proteins transfer phospholipids as well as galactolipids across membranes. May play a role in wax or cutin deposition in the cell walls of expanding epidermal cells and certain secretory tissues. In Pinus taeda (Loblolly pine), this protein is Non-specific lipid-transfer protein.